Here is a 409-residue protein sequence, read N- to C-terminus: Elongation factor Tu (409 aa).

Positions 10–214 (KPHVNIGTIG…AVDAYIPTPE (205 aa)) constitute a tr-type G domain. The G1 stretch occupies residues 19 to 26 (GHVDHGKT). 19 to 26 (GHVDHGKT) provides a ligand contact to GTP. Residue threonine 26 coordinates Mg(2+). The segment at 60–64 (GITIN) is G2. The interval 81–84 (DCPG) is G3. Residues 81 to 85 (DCPGH) and 136 to 139 (NKKD) contribute to the GTP site. The segment at 136 to 139 (NKKD) is G4. The segment at 174–176 (SAL) is G5.

It belongs to the TRAFAC class translation factor GTPase superfamily. Classic translation factor GTPase family. EF-Tu/EF-1A subfamily. As to quaternary structure, monomer.

The protein localises to the cytoplasm. The enzyme catalyses GTP + H2O = GDP + phosphate + H(+). Its function is as follows. GTP hydrolase that promotes the GTP-dependent binding of aminoacyl-tRNA to the A-site of ribosomes during protein biosynthesis. This Gloeobacter violaceus (strain ATCC 29082 / PCC 7421) protein is Elongation factor Tu.